The chain runs to 376 residues: Homocitrate synthase (376 aa).

The Pyruvate carboxyltransferase domain maps to 4–259 (WKIIDSTLRE…RRKYKLEMLP (256 aa)). Residue arginine 12 coordinates 2-oxoglutarate. Glutamate 13 provides a ligand contact to Mg(2+). Histidine 72 contributes to the 2-oxoglutarate binding site. Aspartate 92 provides a ligand contact to L-lysine. Arginine 133 contributes to the 2-oxoglutarate binding site. 2 residues coordinate L-lysine: serine 135 and threonine 166. Position 166 (threonine 166) interacts with 2-oxoglutarate. Mg(2+)-binding residues include histidine 195 and histidine 197. Catalysis depends on histidine 292, which acts as the Proton acceptor.

Belongs to the alpha-IPM synthase/homocitrate synthase family. Homocitrate synthase LYS20/LYS21 subfamily. In terms of assembly, exists in an equilibrium between monomer and homodimer. The cofactor is Mg(2+). Mn(2+) is required as a cofactor.

The protein localises to the cytoplasm. It catalyses the reaction acetyl-CoA + 2-oxoglutarate + H2O = (2R)-homocitrate + CoA + H(+). The enzyme catalyses oxaloacetate + acetyl-CoA + H2O = citrate + CoA + H(+). Its pathway is amino-acid biosynthesis; L-lysine biosynthesis via AAA pathway; L-alpha-aminoadipate from 2-oxoglutarate: step 1/5. Its activity is regulated as follows. Is highly and competitively inhibited by lysine that binds to the active site and competes with 2-oxoglutarate. Is also slightly inhibited by arginine and 2-aminoethylcysteine. Its function is as follows. Catalyzes the aldol-type condensation of 2-oxoglutarate with acetyl-CoA to yield homocitrate. Carries out the first step of the alpha-aminoadipate (AAA) lysine biosynthesis pathway. To a lesser extent, can also use oxaloacetate in place of 2-oxoglutarate, leading to citrate. Does not display 2-isopropylmalate synthase activity since it cannot use 2-oxoisovalerate. This is Homocitrate synthase from Thermus thermophilus (strain ATCC BAA-163 / DSM 7039 / HB27).